A 996-amino-acid chain; its full sequence is Sodium/potassium-transporting ATPase subunit alpha-A (996 aa).

Helical transmembrane passes span 73 to 93 and 107 to 123; these read LFGG…IAYT and LYLG…TGCF. The tract at residues 191–211 is disordered; it reads DNSSLTGESEPQSRSTECTND. 2 helical membrane-spanning segments follow: residues 268 to 290 and 297 to 325; these read FIHI…SFLY and AAIF…TLTA. D353 serves as the catalytic 4-aspartylphosphate intermediate. K483 is a binding site for ATP. Mg(2+)-binding residues include D692 and D696. The next 4 membrane-spanning stretches (helical) occupy residues 762–785, 820–847, 889–909, and 926–951; these read LSPF…ILCI, ERLI…VIMG, YTCH…DLII, and TLNF…DKGL.

It belongs to the cation transport ATPase (P-type) (TC 3.A.3) family. Type IIC subfamily. As to quaternary structure, the sodium/potassium-transporting ATPase is composed of a catalytic alpha subunit, an auxiliary non-catalytic beta subunit and an additional regulatory subunit.

It is found in the cell membrane. The catalysed reaction is K(+)(out) + Na(+)(in) + ATP + H2O = K(+)(in) + Na(+)(out) + ADP + phosphate + H(+). This is the catalytic component of the active enzyme, which catalyzes the hydrolysis of ATP coupled with the exchange of sodium and potassium ions across the plasma membrane. This action creates the electrochemical gradient of sodium and potassium ions, providing the energy for active transport of various nutrients. The chain is Sodium/potassium-transporting ATPase subunit alpha-A from Artemia franciscana (Brine shrimp).